A 96-amino-acid polypeptide reads, in one-letter code: Protein RnfH (96 aa).

It belongs to the UPF0125 (RnfH) family.

The chain is Protein RnfH from Escherichia coli O127:H6 (strain E2348/69 / EPEC).